Here is a 418-residue protein sequence, read N- to C-terminus: MTSTLPKASQPDPSSLQPSARPGAHGRFGRFGGQYVPETLMPALAELEQSAAQAWADPAFTGRLNHLLKTYVGRATPLYEAERLTAHYRRDDGGPRIWLKREDLNHTGAHKINNALGQALLALRMGKKRIIAETGAGQHGVATATVCARFGLDCVIYMGAEDMRRQALNVFRMRLLGATVAPVTAGSATLKDATSEAIRDWVTNVETTHYILGSVAGPHPYPMLVRDFHAVIGQEAKQQCEEAFGRLPDVLMACVGGGSNAMGLFHPFVQDTSVRLIGVEAAGDGVNTPRHAATITEGRAGVLHGAMSLLLQDSDGQVQEAHSISAGLDYPGVGPEHSYLKEIGRAEYAAVTDEQALDGLRLVSELEGIIPALETAHAFAWLEQLCPTLPQGCEVVINCSGRGDKDVNTVAEKLGDKL.

A compositionally biased stretch (polar residues) spans 1-18 (MTSTLPKASQPDPSSLQP). Positions 1–28 (MTSTLPKASQPDPSSLQPSARPGAHGRF) are disordered. Residue K111 is modified to N6-(pyridoxal phosphate)lysine.

This sequence belongs to the TrpB family. As to quaternary structure, tetramer of two alpha and two beta chains. It depends on pyridoxal 5'-phosphate as a cofactor.

It carries out the reaction (1S,2R)-1-C-(indol-3-yl)glycerol 3-phosphate + L-serine = D-glyceraldehyde 3-phosphate + L-tryptophan + H2O. Its pathway is amino-acid biosynthesis; L-tryptophan biosynthesis; L-tryptophan from chorismate: step 5/5. Functionally, the beta subunit is responsible for the synthesis of L-tryptophan from indole and L-serine. The chain is Tryptophan synthase beta chain from Synechococcus sp. (strain CC9902).